A 435-amino-acid polypeptide reads, in one-letter code: ATP-dependent protease ATPase subunit HslU (435 aa).

Residues Val-18, Gly-60 to Glu-65, Asp-248, Glu-313, and Arg-385 each bind ATP.

Belongs to the ClpX chaperone family. HslU subfamily. As to quaternary structure, a double ring-shaped homohexamer of HslV is capped on each side by a ring-shaped HslU homohexamer. The assembly of the HslU/HslV complex is dependent on binding of ATP.

Its subcellular location is the cytoplasm. ATPase subunit of a proteasome-like degradation complex; this subunit has chaperone activity. The binding of ATP and its subsequent hydrolysis by HslU are essential for unfolding of protein substrates subsequently hydrolyzed by HslV. HslU recognizes the N-terminal part of its protein substrates and unfolds these before they are guided to HslV for hydrolysis. In Rhodospirillum rubrum (strain ATCC 11170 / ATH 1.1.1 / DSM 467 / LMG 4362 / NCIMB 8255 / S1), this protein is ATP-dependent protease ATPase subunit HslU.